A 304-amino-acid polypeptide reads, in one-letter code: Probable solute-binding protein AdeT1 (304 aa).

Belongs to the bacterial solute-binding protein 7 family.

Its function is as follows. Mediates antimicrobial resistance via active efflux. Contributes to resistance to antibiotics such as chloramphenicol, erythromycin and novobiocin. May be part of a tripartite ATP-independent periplasmic (TRAP) transport system. The protein is Probable solute-binding protein AdeT1 of Acinetobacter baumannii.